Consider the following 106-residue polypeptide: UPF0473 protein LSEI_0788 (106 aa).

The protein belongs to the UPF0473 family.

The polypeptide is UPF0473 protein LSEI_0788 (Lacticaseibacillus paracasei (strain ATCC 334 / BCRC 17002 / CCUG 31169 / CIP 107868 / KCTC 3260 / NRRL B-441) (Lactobacillus paracasei)).